The following is a 120-amino-acid chain: Large ribosomal subunit protein eL18 (120 aa).

The protein belongs to the eukaryotic ribosomal protein eL18 family.

The chain is Large ribosomal subunit protein eL18 from Thermococcus onnurineus (strain NA1).